We begin with the raw amino-acid sequence, 334 residues long: Formamidase (334 aa).

A CN hydrolase domain is found at 14 to 260; the sequence is FLVAAIQFPV…WEIVTGEIYP (247 aa). The active-site Proton acceptor is Glu-60. Lys-133 acts as the Proton donor in catalysis. Cys-166 (nucleophile) is an active-site residue.

This sequence belongs to the carbon-nitrogen hydrolase superfamily. Aliphatic amidase family.

The enzyme catalyses formamide + H2O = formate + NH4(+). Functionally, is an aliphatic amidase with a restricted substrate specificity, as it only hydrolyzes formamide. The polypeptide is Formamidase (Helicobacter pylori (strain G27)).